Here is a 121-residue protein sequence, read N- to C-terminus: Basic phospholipase A2 homolog blK-PLA2 (121 aa).

7 cysteine pairs are disulfide-bonded: Cys26-Cys115, Cys28-Cys44, Cys43-Cys95, Cys49-Cys121, Cys50-Cys88, Cys57-Cys81, and Cys75-Cys86. The interval 105–117 (KKYRYHLKPFCKK) is important for membrane-damaging activities in eukaryotes and bacteria; heparin-binding.

It belongs to the phospholipase A2 family. Group II subfamily. K49 sub-subfamily. In terms of assembly, homodimer; non-covalently linked. In terms of tissue distribution, expressed by the venom gland.

Its subcellular location is the secreted. In terms of biological role, snake venom phospholipase A2 (PLA2) homolog that lacks enzymatic activity. Shows myotoxic and edema-inducing activities in vivo. A model of myotoxic mechanism has been proposed: an apo Lys49-PLA2 is activated by the entrance of a hydrophobic molecule (e.g. fatty acid) at the hydrophobic channel of the protein leading to a reorientation of a monomer. This reorientation causes a transition between 'inactive' to 'active' states, causing alignment of C-terminal and membrane-docking sites (MDoS) side-by-side and putting the membrane-disruption sites (MDiS) in the same plane, exposed to solvent and in a symmetric position for both monomers. The MDoS region stabilizes the toxin on membrane by the interaction of charged residues with phospholipid head groups. Subsequently, the MDiS region destabilizes the membrane with penetration of hydrophobic residues. This insertion causes a disorganization of the membrane, allowing an uncontrolled influx of ions (i.e. calcium and sodium), and eventually triggering irreversible intracellular alterations and cell death. This Bothrops leucurus (Whitetail lancehead) protein is Basic phospholipase A2 homolog blK-PLA2.